The chain runs to 378 residues: Mannitol-1-phosphate 5-dehydrogenase (378 aa).

Residue 4-15 (SVHFGAGNIGRG) coordinates NAD(+).

This sequence belongs to the mannitol dehydrogenase family.

The catalysed reaction is D-mannitol 1-phosphate + NAD(+) = beta-D-fructose 6-phosphate + NADH + H(+). This chain is Mannitol-1-phosphate 5-dehydrogenase, found in Streptococcus pneumoniae (strain JJA).